A 376-amino-acid chain; its full sequence is NAD(P)H-quinone oxidoreductase subunit 1, chloroplastic (376 aa).

9 helical membrane-spanning segments follow: residues 27-47 (LISI…GVLV), 65-85 (PEYA…KLLI), 97-117 (WLFS…YLVV), 130-150 (LGIF…LIAG), 166-186 (AAQS…ISLL), 251-271 (GIKF…SSLF), 272-292 (AVVL…IFFI), 310-330 (LIIP…FIFF), and 353-373 (FLLP…LTLF).

It belongs to the complex I subunit 1 family. In terms of assembly, NDH is composed of at least 16 different subunits, 5 of which are encoded in the nucleus.

The protein resides in the plastid. It is found in the chloroplast thylakoid membrane. It carries out the reaction a plastoquinone + NADH + (n+1) H(+)(in) = a plastoquinol + NAD(+) + n H(+)(out). The catalysed reaction is a plastoquinone + NADPH + (n+1) H(+)(in) = a plastoquinol + NADP(+) + n H(+)(out). In terms of biological role, NDH shuttles electrons from NAD(P)H:plastoquinone, via FMN and iron-sulfur (Fe-S) centers, to quinones in the photosynthetic chain and possibly in a chloroplast respiratory chain. The immediate electron acceptor for the enzyme in this species is believed to be plastoquinone. Couples the redox reaction to proton translocation, and thus conserves the redox energy in a proton gradient. The sequence is that of NAD(P)H-quinone oxidoreductase subunit 1, chloroplastic from Chara vulgaris (Common stonewort).